We begin with the raw amino-acid sequence, 352 residues long: Photosystem II D2 protein (352 aa).

Residues 40–60 (CAYLAVGAWFTGTTFVTSWYT) form a helical membrane-spanning segment. A chlorophyll a-binding site is contributed by His-117. A helical membrane pass occupies residues 124-140 (GFTLRQFEIARLIGLRP). Pheophytin a contacts are provided by Gln-129 and Asn-142. Residues 152-165 (VFVSVFLLYPLGQA) traverse the membrane as a helical segment. His-197 provides a ligand contact to chlorophyll a. The chain crosses the membrane as a helical span at residues 207-227 (AALLCAIHGATVENTLFEDGD). His-214 and Phe-261 together coordinate a plastoquinone. Position 214 (His-214) interacts with Fe cation. His-268 is a Fe cation binding site. A helical membrane pass occupies residues 278-294 (GLWMSAIGVVGLGVNLR).

Belongs to the reaction center PufL/M/PsbA/D family. As to quaternary structure, PSII is composed of 1 copy each of membrane proteins PsbA, PsbB, PsbC, PsbD, PsbE, PsbF, PsbH, PsbI, PsbJ, PsbK, PsbL, PsbM, PsbT, PsbX, PsbY, PsbZ, Psb30/Ycf12, at least 3 peripheral proteins of the oxygen-evolving complex and a large number of cofactors. It forms dimeric complexes. The cofactor is The D1/D2 heterodimer binds P680, chlorophylls that are the primary electron donor of PSII, and subsequent electron acceptors. It shares a non-heme iron and each subunit binds pheophytin, quinone, additional chlorophylls, carotenoids and lipids. There is also a Cl(-1) ion associated with D1 and D2, which is required for oxygen evolution. The PSII complex binds additional chlorophylls, carotenoids and specific lipids..

The protein resides in the plastid. It is found in the cyanelle thylakoid membrane. The catalysed reaction is 2 a plastoquinone + 4 hnu + 2 H2O = 2 a plastoquinol + O2. Its function is as follows. Photosystem II (PSII) is a light-driven water:plastoquinone oxidoreductase that uses light energy to abstract electrons from H(2)O, generating O(2) and a proton gradient subsequently used for ATP formation. It consists of a core antenna complex that captures photons, and an electron transfer chain that converts photonic excitation into a charge separation. The D1/D2 (PsbA/PsbD) reaction center heterodimer binds P680, the primary electron donor of PSII as well as several subsequent electron acceptors. D2 is needed for assembly of a stable PSII complex. In Cyanophora paradoxa, this protein is Photosystem II D2 protein.